Reading from the N-terminus, the 2153-residue chain is Non-reducing polyketide synthase albA (2153 aa).

The interval 8–244 (YLFGDQTSDI…VKAPIHGPYH (237 aa)) is N-terminal acylcarrier protein transacylase domain (SAT). The 432-residue stretch at 375–806 (NSKIAIIGMS…GGNTALLLED (432 aa)) folds into the Ketosynthase family 3 (KS3) domain. Catalysis depends on for beta-ketoacyl synthase activity residues C547, H682, and H724. Residues 912-1232 (FVFTGQGAQY…LASLHLAGID (321 aa)) form a malonyl-CoA:ACP transacylase (MAT) domain region. Residue S1001 is the For acyl/malonyl transferase activity of the active site. An N-terminal hotdog fold region spans residues 1286-1425 (HEYLTTAAQK…CTVRFFDCAA (140 aa)). Positions 1286–1598 (HEYLTTAAQK…FQALSRKILD (313 aa)) constitute a PKS/mFAS DH domain. The tract at residues 1290-1603 (TTAAQKVIET…RKILDTVLPP (314 aa)) is product template (PT) domain. The active-site Proton acceptor; for dehydratase activity is the H1326. The segment at 1452–1598 (DAHRLGRGMV…FQALSRKILD (147 aa)) is C-terminal hotdog fold. D1511 (proton donor; for dehydratase activity) is an active-site residue. The interval 1608 to 1643 (KGPARPAASAQKAAPAAAASKSRASAPAPAKPAAKP) is disordered. A compositionally biased stretch (low complexity) spans 1610-1643 (PARPAASAQKAAPAAAASKSRASAPAPAKPAAKP). One can recognise a Carrier 1 domain in the interval 1643-1720 (PSAPSLVKRA…DFKQFLAPMS (78 aa)). S1680 is subject to O-(pantetheine 4'-phosphoryl)serine. The disordered stretch occupies residues 1720–1765 (SQGEASDGSTSDPESSSSFNGGSSTDESSAGSPVSSPPNEKVTQVE). Residues 1725 to 1748 (SDGSTSDPESSSSFNGGSSTDESS) show a composition bias toward low complexity. Over residues 1749 to 1765 (AGSPVSSPPNEKVTQVE) the composition is skewed to polar residues. The Carrier 2 domain occupies 1764–1841 (VEQHATIKEI…DVEDALGLKP (78 aa)). Residue S1801 is modified to O-(pantetheine 4'-phosphoryl)serine. The segment at 1879-2151 (SPHPRSTSIL…ELGSFIGNAM (273 aa)) is claisen cyclase domain. S1969 acts as the For Claisen cyclase activity in catalysis.

It carries out the reaction 6 malonyl-CoA + acetyl-CoA + 6 H(+) = naphtopyrone YWA1 + 6 CO2 + 7 CoA + H2O. Its pathway is secondary metabolite biosynthesis. In terms of biological role, non-reducing polyketide synthase; part of the gene cluster that mediates the biosynthesis of aurasperone B, a dimeric gamma-naphthopyrone. The first step in the biosynthesis of aurasperone B is the production of gamma-naphthopyrone precursor YWA1 by the non-reducing polyketide synthase albA, via condensation of one acetyl-CoA starter unit with 6 malonyl-CoA units. YWA1 is then methylated by aunE at position C-6 to yield foncesin which is further methylated at position C-8 by aunD to produce fonsecin B. A key enzyme in the biosynthetic pathway is the cytochrome P450 monooxygenase aunB which catalyzes the oxidative dimerization of fonsecin B to aurasperone B. AunB also catalyzes the oxidative dimerization of rubrofusarin B into aurasperone A. The chain is Non-reducing polyketide synthase albA from Aspergillus niger (strain ATCC MYA-4892 / CBS 513.88 / FGSC A1513).